We begin with the raw amino-acid sequence, 473 residues long: Envelope glycoprotein M (473 aa).

Topologically, residues 1 to 32 (MGRPAPRGSPDSAPPTKGMTGARTAWWVWCVQ) are intravirion. The chain crosses the membrane as a helical span at residues 33 to 53 (VATFVVSAVCVTGLLVLASVF). At 54-90 (RARFPCFYATASSYAGVNSTAEVRGGVAVPLRLDTQS) the chain is on the virion surface side. A helical membrane pass occupies residues 91 to 111 (LVGTYVITAVLLLAVAVYAVV). Topologically, residues 112–137 (GAVTSRYDRALDAGRRLAAARMAMPH) are intravirion. Residues 138-158 (ATLIAGNVCSWLLQITVLLLA) form a helical membrane-spanning segment. Residues 159–163 (HRISQ) lie on the Virion surface side of the membrane. A helical membrane pass occupies residues 164–184 (LAHLVYVLHFACLVYFAAHFC). The Intravirion portion of the chain corresponds to 185 to 216 (TRGVLSGTYLRQVHGLMELAPTHHRVVGPARA). The chain crosses the membrane as a helical span at residues 217-237 (VLTNALLLGVFLCTADAAVSL). Residues 238–250 (NTIAAFNFNFSAP) are Virion surface-facing. A helical transmembrane segment spans residues 251 to 271 (GMLICLTVLFAILVVSLLLVV). Residues 272-280 (EGVLCHYVR) lie on the Intravirion side of the membrane. The chain crosses the membrane as a helical span at residues 281-301 (VLVGPHLGAVAATGIVGLACE). Residues 302 to 318 (HYYTNGYYVVETQWPGA) lie on the Virion surface side of the membrane. The chain crosses the membrane as a helical span at residues 319–339 (QTGVRVALALVAAFALGMAVL). At 340-473 (RCTRAYLYHR…DPVYSTVRRW (134 aa)) the chain is on the intravirion side. 2 disordered regions span residues 371 to 399 (KRVR…PEYA) and 440 to 473 (HPRH…VRRW).

This sequence belongs to the herpesviridae glycoprotein M family. As to quaternary structure, interacts (via N-terminus) with gN (via N-terminus). The gM-gN heterodimer forms the gCII complex.

Its subcellular location is the virion membrane. It is found in the host Golgi apparatus. It localises to the host trans-Golgi network. The protein resides in the host endosome membrane. The protein localises to the host nucleus inner membrane. Envelope glycoprotein important for virion assembly and egress. Plays a role in the correct incorporation of gH-gL into virion membrane. Directs the glycoprotein N (gN) to the host trans-Golgi network. The polypeptide is Envelope glycoprotein M (Human herpesvirus 1 (strain 17) (HHV-1)).